A 149-amino-acid polypeptide reads, in one-letter code: Transcriptional repressor NrdR (149 aa).

A zinc finger lies at 3-34; that stretch reads CPFCSATDTKVIDSRLVSDGHQVRRRRQCLAC. In terms of domain architecture, ATP-cone spans 49–139; that stretch reads PKVIKSNGNR…VYRSFEDIKE (91 aa).

This sequence belongs to the NrdR family. Requires Zn(2+) as cofactor.

Functionally, negatively regulates transcription of bacterial ribonucleotide reductase nrd genes and operons by binding to NrdR-boxes. The chain is Transcriptional repressor NrdR from Aliivibrio fischeri (strain ATCC 700601 / ES114) (Vibrio fischeri).